A 770-amino-acid chain; its full sequence is Amyloid-beta precursor protein (770 aa).

Positions 1–17 are cleaved as a signal peptide; that stretch reads MLPSLALLLLAAWTVRA. Residues 18-701 are Extracellular-facing; that stretch reads LEVPTDGNAG…AEDVGSNKGA (684 aa). Positions 28 to 123 are GFLD subdomain; that stretch reads LLAEPQIAMF…PYRCLVGEFV (96 aa). The E1 domain maps to 28–189; the sequence is LLAEPQIAMF…RGVEFVCCPL (162 aa). Cystine bridges form between C38–C62, C73–C117, C98–C105, C133–C187, C144–C174, and C158–C186. Residue 96–110 participates in heparin binding; sequence NWCKRGRKQCKTHTH. Residues 131–189 form a cuBD subdomain region; that stretch reads DKCKFLHQERMDVCETHLHWHTVAKETCSEKSTNLHDYGMLLPCGIDKFRGVEFVCCPL. Positions 147, 151, and 168 each coordinate Cu(2+). A zinc-binding region spans residues 181-188; it reads GVEFVCCP. Zn(2+)-binding residues include E183, C186, and C187. A compositionally biased stretch (acidic residues) spans 193–207; the sequence is SDSVDSADAEEDDSD. The interval 193–284 is disordered; the sequence is SDSVDSADAE…TTTTTTESVE (92 aa). The residue at position 198 (S198) is a Phosphoserine; by CK2. Position 206 is a phosphoserine; by CK1 (S206). 2 positions are modified to sulfotyrosine: Y217 and Y262. The span at 228 to 264 shows a compositional bias: acidic residues; the sequence is VAEEEEVADVEEEEADDDEDVEDGDEVEEEAEEPYEE. Over residues 268-281 the composition is skewed to low complexity; that stretch reads RTTSTATTTTTTTE. Intrachain disulfides connect C291–C341, C300–C324, and C316–C337. A BPTI/Kunitz inhibitor domain is found at 291 to 341; that stretch reads CSEQAETGPCRAMISRWYFDVTEGKCVPFFYGGCGGNRNNFDTEEYCMAVC. Y336 carries the sulfotyrosine modification. The OX-2 signature appears at 344–365; it reads VSTQSLLKTTSEPLPQDPDKLP. The region spanning 374 to 565 is the E2 domain; that stretch reads AVDKYLETPG…EEIQDEVDEL (192 aa). The interval 391–423 is heparin-binding; the sequence is FQKAKERLEAKHRERMSQVMREWEEAERQAKNL. The residue at position 441 (S441) is a Phosphoserine. The heparin-binding stretch occupies residues 491–522; sequence FNMLKKYVRAEQKDRQHTLKHFEHVRMVDPKK. A Phosphotyrosine modification is found at Y497. The tract at residues 523–540 is collagen-binding; the sequence is AAQIRSQVMTHLRVIYER. N542 and N571 each carry an N-linked (GlcNAc...) asparagine glycan. Cu(2+) is bound by residues H677 and H685. 2 residues coordinate Zn(2+): H677 and H685. The tract at residues 695–722 is interaction with PSEN1; it reads VGSNKGAIIGLMVGGVVIATVIVITLVM. A helical transmembrane segment spans residues 702 to 722; it reads IIGLMVGGVVIATVIVITLVM. Residues 723 to 770 lie on the Cytoplasmic side of the membrane; sequence LKKKQYTSIHHGVVEVDAAVTPEERHLSKMQQNGYENPTYKFFEQMQN. Residues 724–734 carry the Basolateral sorting signal motif; the sequence is KKKQYTSIHHG. A Phosphothreonine modification is found at T729. S730 is subject to Phosphoserine; by APP-kinase I. The segment at 732–751 is interaction with G(o)-alpha; the sequence is HHGVVEVDAAVTPEERHLSK. T743 is modified (phosphothreonine; by CDK5 and MAPK10 and LRRK2). The segment at 756-770 is interaction with DAB2; it reads GYENPTYKFFEQMQN. Positions 756–770 are required for the interaction with KIF5B and for anterograde transport in axons; the sequence is GYENPTYKFFEQMQN. At Y757 the chain carries Phosphotyrosine; by ABL1. A YENPXY motif; contains endocytosis signal motif is present at residues 757–762; sequence YENPTY. K763 participates in a covalent cross-link: Glycyl lysine isopeptide (Lys-Gly) (interchain with G-Cter in ubiquitin).

The protein belongs to the APP family. Binds, via its C-terminus, to the PID domain of several cytoplasmic proteins, including APBB family members, the APBA family, MAPK8IP1, SHC1, NUMB and DAB1. Binding to DAB1 inhibits its serine phosphorylation. Interacts (via NPXY motif) with DAB2 (via PID domain); the interaction is impaired by tyrosine phosphorylation of the NPXY motif. Also interacts with GPCR-like protein BPP, APPBP1, IB1, KNS2 (via its TPR domains), APPBP2 (via BaSS) and DDB1. In vitro, it binds MAPT via the MT-binding domains. Associates with microtubules in the presence of ATP and in a kinesin-dependent manner. Interacts, through a C-terminal domain, with GNAO1. Amyloid-beta protein 42 binds CHRNA7 in hippocampal neurons. Amyloid-beta associates with HADH2. Interacts with ANKS1B and AGER. Interacts with CPEB1. Interacts with ITM2B. Interacts with ITM2C. Interacts with IDE. Can form homodimers; dimerization is enhanced in the presence of Cu(2+) ions. Can form homodimers; this is promoted by heparin binding. Amyloid-beta protein 40 interacts with S100A9. CTF-alpha product of APP interacts with GSAP. Isoform APP695 interacts with SORL1 (via N-terminal ectodomain); this interaction retains APP in the trans-Golgi network and reduces processing into soluble APP-alpha and amyloid-beta peptides. The C99 fragment also interacts with SORL1. Isoform APP751 interacts with SORL1. Isoform APP770 interacts with SORL1. Interacts with PLD3. Interacts with VDAC1. Interacts with NSG1; could regulate APP processing. Amyloid-beta protein 42 interacts with FPR2. Interacts with SYT7. Interacts (via transmembrane region) with PSEN1; the interaction is direct. Interacts with LRRK2. Interacts (via cytoplasmic domain) with KIF5B. Interacts (via C-terminus) with APBB2/FE65L1 (via C-terminus). Interacts (via intracellular domain) with APBB3. In terms of processing, proteolytically processed under normal cellular conditions. Cleavage either by alpha-secretase, beta-secretase or theta-secretase leads to generation and extracellular release of soluble APP peptides, S-APP-alpha and S-APP-beta, and the retention of corresponding membrane-anchored C-terminal fragments, C80, C83 and C99. Subsequent processing of C80 and C83 by gamma-secretase yields P3 peptides. This is the major secretory pathway and is non-amyloidogenic. Alternatively, presenilin/nicastrin-mediated gamma-secretase processing of C99 releases the amyloid-beta proteins, amyloid-beta protein 40 and amyloid-beta protein 42, major components of amyloid plaques, and the cytotoxic C-terminal fragments, gamma-CTF(50), gamma-CTF(57) and gamma-CTF(59). PSEN1 cleavage is more efficient with C83 than with C99 as substrate (in vitro). Amyloid-beta protein 40 and Amyloid-beta protein 42 are cleaved by ACE. Many other minor amyloid-beta peptides, amyloid-beta 1-X peptides, are found in cerebral spinal fluid (CSF) including the amyloid-beta X-15 peptides, produced from the cleavage by alpha-secretase. Proteolytically cleaved by caspases during neuronal apoptosis. Cleavage at Asp-739 by either CASP6, CASP8 or CASP9 results in the production of the neurotoxic C31 peptide and the increased production of amyloid-beta peptides. Post-translationally, N- and O-glycosylated. In terms of processing, phosphorylation in the C-terminal on tyrosine, threonine and serine residues is neuron-specific. Phosphorylation can affect APP processing, neuronal differentiation and interaction with other proteins. Phosphorylated on Thr-743 in neuronal cells by Cdc5 kinase and Mapk10, in dividing cells by Cdc2 kinase in a cell-cycle dependent manner with maximal levels at the G2/M phase and, in vitro, by GSK-3-beta. The Thr-743 phosphorylated form causes a conformational change which reduces binding of Fe65 family members. In dopaminergic (DA) neurons, phosphorylation on Thr-743 by LRKK2 promotes the production and the nuclear translocation of the APP intracellular domain (AICD) which induces DA neuron apoptosis. Phosphorylation on Tyr-757 is required for SHC binding. Phosphorylated in the extracellular domain by casein kinases on both soluble and membrane-bound APP. This phosphorylation is inhibited by heparin. Extracellular binding and reduction of copper, results in a corresponding oxidation of Cys-144 and Cys-158, and the formation of a disulfide bond. Post-translationally, trophic-factor deprivation triggers the cleavage of surface APP by beta-secretase to release sAPP-beta which is further cleaved to release an N-terminal fragment of APP (N-APP). In terms of processing, amyloid-beta peptides are degraded by IDE. Sulfated on tyrosine residues. Expressed in the brain with expression in cortex, cerebellum, hippocampus, olfactory bulb, neurons, astrocytes and microglia (at protein level). Expressed in the retinal lens. Expressed at a low level in muscle cells (at protein level). In terms of tissue distribution, expressed in kidney. As to expression, widely expressed. Expressed in several different brain regions including hippocampus, substantia nigra pars compacta and cerebellum. Within the cerebellum, abundantly expressed in Purkinje cells. Expressed in the brain, kidney and liver. Expressed in several different brain regions including hippocampus, substantia nigra pars compacta and cerebellum. Within the cerebellum, abundantly expressed in Purkinje cells. In terms of tissue distribution, expressed in several different brain regions including hippocampus, substantia nigra pars compacta and cerebellum. Within the cerebellum, abundantly expressed in Purkinje cells.

It is found in the cell membrane. The protein localises to the membrane. The protein resides in the perikaryon. Its subcellular location is the cell projection. It localises to the growth cone. It is found in the clathrin-coated pit. The protein localises to the early endosome. The protein resides in the cytoplasmic vesicle. Its subcellular location is the golgi apparatus. It localises to the trans-Golgi network. It is found in the endoplasmic reticulum. The protein localises to the secreted. The protein resides in the cell surface. Its subcellular location is the nucleus. It localises to the cytoplasm. In terms of biological role, functions as a cell surface receptor and performs physiological functions on the surface of neurons relevant to neurite growth, neuronal adhesion and axonogenesis. Interaction between APP molecules on neighboring cells promotes synaptogenesis. Involved in cell mobility and transcription regulation through protein-protein interactions. Can promote transcription activation through binding to APBB1-KAT5 and inhibit Notch signaling through interaction with Numb. Couples to apoptosis-inducing pathways such as those mediated by G(o) and JIP. Inhibits G(o)-alpha ATPase activity. Acts as a kinesin I membrane receptor, mediating the axonal transport of beta-secretase and presenilin 1. By acting as a kinesin I membrane receptor, plays a role in axonal anterograde transport of cargo towards synapses in axons. May be involved in copper homeostasis/oxidative stress through copper ion reduction. Can regulate neurite outgrowth through binding to components of the extracellular matrix such as heparin and collagen I and IV. The splice isoforms that contain the BPTI domain possess protease inhibitor activity. Induces a AGER-dependent pathway that involves activation of p38 MAPK, resulting in internalization of amyloid-beta peptide and leading to mitochondrial dysfunction in cultured cortical neurons. Provides Cu(2+) ions for GPC1 which are required for release of nitric oxide (NO) and subsequent degradation of the heparan sulfate chains on GPC1. Its function is as follows. Amyloid-beta peptides are lipophilic metal chelators with metal-reducing activity. Binds transient metals such as copper, zinc and iron. Rat and mouse amyloid-beta peptides bind only weakly transient metals and have little reducing activity due to substitutions of transient metal chelating residues. Amyloid-beta protein 42 may activate mononuclear phagocytes in the brain and elicit inflammatory responses. Promotes both tau aggregation and TPK II-mediated phosphorylation. Also binds GPC1 in lipid rafts. The gamma-CTF peptides as well as the caspase-cleaved peptides, including C31, are potent enhancers of neuronal apoptosis. This chain is Amyloid-beta precursor protein, found in Mus musculus (Mouse).